Here is a 391-residue protein sequence, read N- to C-terminus: uncharacterized protein (391 aa).

Residues 247–387 (AVIVYATIYS…KIKEFGRKLA (141 aa)) enclose the Flavodoxin-like domain.

This is an uncharacterized protein from Methanocaldococcus jannaschii (strain ATCC 43067 / DSM 2661 / JAL-1 / JCM 10045 / NBRC 100440) (Methanococcus jannaschii).